A 35-amino-acid chain; its full sequence is Photosystem II reaction center protein M (35 aa).

Residues 5 to 25 (ILGLIATALFILIPTSFLIIL) traverse the membrane as a helical segment.

Belongs to the PsbM family. As to quaternary structure, PSII is composed of 1 copy each of membrane proteins PsbA, PsbB, PsbC, PsbD, PsbE, PsbF, PsbH, PsbI, PsbJ, PsbK, PsbL, PsbM, PsbT, PsbX, PsbY, PsbZ, Psb30/Ycf12, at least 3 peripheral proteins of the oxygen-evolving complex and a large number of cofactors. It forms dimeric complexes.

It is found in the plastid. It localises to the chloroplast thylakoid membrane. In terms of biological role, one of the components of the core complex of photosystem II (PSII). PSII is a light-driven water:plastoquinone oxidoreductase that uses light energy to abstract electrons from H(2)O, generating O(2) and a proton gradient subsequently used for ATP formation. It consists of a core antenna complex that captures photons, and an electron transfer chain that converts photonic excitation into a charge separation. This subunit is found at the monomer-monomer interface. This Oltmannsiellopsis viridis (Marine flagellate) protein is Photosystem II reaction center protein M.